The primary structure comprises 103 residues: Matrix Gla protein (103 aa).

The N-terminal stretch at 1 to 19 (MKSLVLLAILAALAVVTLC) is a signal peptide. E21 carries the 4-carboxyglutamate modification. S22, S25, and S28 each carry phosphoserine. The 47-residue stretch at 51–97 (RAKVQERIRERSKPVHELNREACDDYRLCERYAMVYGYNAAYNRYFR) folds into the Gla domain. 4-carboxyglutamate occurs at positions 56, 60, 67, and 71. A disulfide bridge links C73 with C79. Positions 97-103 (RERRGAK) are cleaved as a propeptide — removed in mature form; probably by carboxypeptidase N.

This sequence belongs to the osteocalcin/matrix Gla protein family. In terms of processing, requires vitamin K-dependent gamma-carboxylation for its function.

The protein resides in the secreted. In terms of biological role, associates with the organic matrix of bone and cartilage. Thought to act as an inhibitor of bone formation. The chain is Matrix Gla protein (MGP) from Pongo abelii (Sumatran orangutan).